The following is a 237-amino-acid chain: Ribosomal RNA small subunit methyltransferase G (237 aa).

A disordered region spans residues 1–25 (MASRHSPQTAAQPDAADKAQALRLT). Residues 7–21 (PQTAAQPDAADKAQA) are compositionally biased toward low complexity. 3 residues coordinate S-adenosyl-L-methionine: Gly-85, Phe-90, and Arg-155.

It belongs to the methyltransferase superfamily. RNA methyltransferase RsmG family.

It localises to the cytoplasm. It catalyses the reaction guanosine(527) in 16S rRNA + S-adenosyl-L-methionine = N(7)-methylguanosine(527) in 16S rRNA + S-adenosyl-L-homocysteine. Its function is as follows. Specifically methylates the N7 position of guanine in position 527 of 16S rRNA. The sequence is that of Ribosomal RNA small subunit methyltransferase G from Rhodopseudomonas palustris (strain HaA2).